The sequence spans 318 residues: Biotin synthase (318 aa).

Residues 46-272 form the Radical SAM core domain; the sequence is DGVDVEQLNN…RSVVKISGGR (227 aa). 3 residues coordinate [4Fe-4S] cluster: Cys61, Cys65, and Cys68. 4 residues coordinate [2Fe-2S] cluster: Cys105, Cys138, Cys197, and Lys267.

This sequence belongs to the radical SAM superfamily. Biotin synthase family. In terms of assembly, homodimer. The cofactor is [4Fe-4S] cluster. [2Fe-2S] cluster is required as a cofactor.

The enzyme catalyses (4R,5S)-dethiobiotin + (sulfur carrier)-SH + 2 reduced [2Fe-2S]-[ferredoxin] + 2 S-adenosyl-L-methionine = (sulfur carrier)-H + biotin + 2 5'-deoxyadenosine + 2 L-methionine + 2 oxidized [2Fe-2S]-[ferredoxin]. The protein operates within cofactor biosynthesis; biotin biosynthesis; biotin from 7,8-diaminononanoate: step 2/2. Catalyzes the conversion of dethiobiotin (DTB) to biotin by the insertion of a sulfur atom into dethiobiotin via a radical-based mechanism. The polypeptide is Biotin synthase (Cenarchaeum symbiosum (strain A)).